The primary structure comprises 424 residues: UDP-sugar transporter protein SLC35A5 (424 aa).

Residues 1–8 (MEKQCCSH) are Cytoplasmic-facing. The chain crosses the membrane as a helical span at residues 9-29 (PVICSLSTMYTFLLGAIFIAL). The Lumenal segment spans residues 30–53 (SSSRILLVKYSANEENKYDYLPTT). A helical transmembrane segment spans residues 54-74 (ANVCSELVKLVFCVLVSFCVI). Topologically, residues 75 to 93 (KKDHQSRNLKYASWKEFSN) are cytoplasmic. A helical transmembrane segment spans residues 94 to 116 (FMKWSIPAFLYFLDNLIVFYVLS). Topologically, residues 117 to 119 (YLQ) are lumenal. A helical membrane pass occupies residues 120 to 142 (PAMAVIFSNFSIITTALLFRIVL). The Cytoplasmic portion of the chain corresponds to 143–147 (KRRLN). The chain crosses the membrane as a helical span at residues 148–168 (WIQWASLLILFLSIVALTAGT). Over 169–228 (KTLQHNLAGHGFHHDAFFSPSNSCLLFRSECPRKDNCTAKEWTFPEAKWNTTARVFSHIR) the chain is Lumenal. The N-linked (GlcNAc...) asparagine glycan is linked to N204. Residues 229–249 (LGMGHVLIIVQCFISSMANIY) form a helical membrane-spanning segment. At 250–263 (NEKILKEGNQLAES) the chain is on the cytoplasmic side. The helical transmembrane segment at 264 to 284 (IFIQNSKLYFFGILFNGLTLG) threads the bilayer. Topologically, residues 285–303 (LQRSNRDQIKNCGFFYGHN) are lumenal. Residues 304 to 324 (AFSVALIFVTAFQGLSVAFIL) form a helical membrane-spanning segment. At 325-330 (KFLDNM) the chain is on the cytoplasmic side. A helical membrane pass occupies residues 331–351 (FHVLMAQVTTVIITTVSVLVF). The Lumenal segment spans residues 352-354 (DFR). A helical membrane pass occupies residues 355-375 (PSLEFFLEAPSVLLSIFIYNA). At 376–424 (SKPQGPEYAPRQERIRDLSGNLWERSSGDGEELERLTKPKSDESDEDTF) the chain is on the cytoplasmic side. Phosphoserine is present on residues S394, S416, and S419. Residues 395–424 (GNLWERSSGDGEELERLTKPKSDESDEDTF) form a disordered region. The segment covering 408–417 (LERLTKPKSD) has biased composition (basic and acidic residues).

This sequence belongs to the nucleotide-sugar transporter family. SLC35A subfamily. In terms of assembly, probably forms homooligomers and heterooligomers with SLC35A1, SLC35A2, SLC35A3 and SLC35A4.

It localises to the golgi apparatus membrane. The catalysed reaction is UMP(out) + UDP-alpha-D-glucuronate(in) = UMP(in) + UDP-alpha-D-glucuronate(out). It catalyses the reaction UMP(out) + UDP-N-acetyl-alpha-D-glucosamine(in) = UMP(in) + UDP-N-acetyl-alpha-D-glucosamine(out). The enzyme catalyses UDP-N-acetyl-alpha-D-galactosamine(in) + UMP(out) = UDP-N-acetyl-alpha-D-galactosamine(out) + UMP(in). Its function is as follows. Probable UDP-sugar:UMP transmembrane antiporter involved in UDP-alpha-D-glucuronate/UDP-GlcA, UDP-GlcNAc/UDP-N-acetyl-alpha-D-glucosamine and UDP-N-acetyl-alpha-D-galactosamine/UDP-GalNAc transport from the cytosol to the lumen of the Golgi. The sequence is that of UDP-sugar transporter protein SLC35A5 from Pongo abelii (Sumatran orangutan).